The following is a 264-amino-acid chain: Outer kinetochore KNL1 complex subunit sos7 (264 aa).

Residues 90–236 (EAEDNEKLET…SNQIKAAIHT (147 aa)) adopt a coiled-coil conformation.

The protein belongs to the KRE28 family. As to quaternary structure, component of the KNL1/SPC105 complex composed of at least spc7 and sos7. Part of the outer kinetochore KMN network that includes the KNL1, MIS12 and NDC80 complexes. Interacts (via C-terminus) with spc7 (via C-terminus); the interaction is direct.

Its subcellular location is the nucleus. The protein resides in the chromosome. The protein localises to the centromere. It is found in the kinetochore. Its function is as follows. Acts as a component of the outer kinetochore KNL1 complex that facilitates microtubule-kinetochore interactions and the spindle assembly checkpoint. Kinetochores, consisting of a centromere-associated inner segment and a microtubule-contacting outer segment, play a crucial role in chromosome segregation by mediating the physical connection between centromeric DNA and spindle microtubules. The outer kinetochore is made up of the ten-subunit KMN network, comprising the MIS12, NDC80 and KNL1 complexes, and auxiliary microtubule-associated components; together they connect the outer kinetochore with the inner kinetochore, bind microtubules, and mediate interactions with mitotic checkpoint proteins that delay anaphase until chromosomes are bioriented on the spindle. In Schizosaccharomyces pombe (strain 972 / ATCC 24843) (Fission yeast), this protein is Outer kinetochore KNL1 complex subunit sos7 (sos7).